Consider the following 504-residue polypeptide: MADKYILAIDEGTTSTRTIIFDHAGNKMADAQREFPQYFPKPGWVEHNANEIWNAVLSTIANAFIESGIKPNQISGIGITNQRETTVIWDKKTGLPIYNAVVWQSRQTAEIAEQLVKDGYGDMIHQKTGLVTDAYFSATKIRWILDHVDGAQARAERGELLFGTIDTWLMWKLTDGDVHVTDYSNASRTMLYNIHKLEWDKEILALLNIPASMLPEVKPNSTIYGKTKDYHFYGSEVPISGMAGDQQAALFGQLAFEPGMVKNTYGTGAFTVMNTGEKPQLSDNNLLTTIGYGINGKVYYALEGSIFVAGSAIQWLRDGMKLFKKASESEAAAVASQNDNEVYVVPAFTGLGAPYWDPNARGSVFGITRGTTREDFIKATLQSLAYQSRDVIDTMKKDSGIDIPSIRVDGGASNNDYLMQFQSDILGIEIDRASDLETTALGAAFLAGLAVGFWKDLEDLKKEYKPGKVFKPKMSTDEREDLYTGWQEAVAATRQFKHRPRQSK.

Residue Thr13 participates in ADP binding. The ATP site is built by Thr13, Thr14, and Ser15. Thr13 is a binding site for sn-glycerol 3-phosphate. Arg17 contributes to the ADP binding site. 3 residues coordinate sn-glycerol 3-phosphate: Arg83, Glu84, and Tyr135. Glycerol contacts are provided by Arg83, Glu84, and Tyr135. His231 carries the phosphohistidine; by HPr modification. A sn-glycerol 3-phosphate-binding site is contributed by Asp245. Glycerol is bound by residues Asp245 and Gln246. 2 residues coordinate ADP: Thr267 and Gly310. Thr267, Gly310, Gln314, and Gly411 together coordinate ATP. Positions 411 and 415 each coordinate ADP.

Belongs to the FGGY kinase family. As to quaternary structure, homotetramer and homodimer (in equilibrium). Post-translationally, the phosphoenolpyruvate-dependent sugar phosphotransferase system (PTS), including enzyme I, and histidine-containing protein (HPr) are required for the phosphorylation, which leads to the activation of the enzyme.

It carries out the reaction glycerol + ATP = sn-glycerol 3-phosphate + ADP + H(+). Its pathway is polyol metabolism; glycerol degradation via glycerol kinase pathway; sn-glycerol 3-phosphate from glycerol: step 1/1. Its activity is regulated as follows. Activated by phosphorylation and inhibited by fructose 1,6-bisphosphate (FBP). Its function is as follows. Key enzyme in the regulation of glycerol uptake and metabolism. Catalyzes the phosphorylation of glycerol to yield sn-glycerol 3-phosphate. The chain is Glycerol kinase from Pediococcus pentosaceus (strain ATCC 25745 / CCUG 21536 / LMG 10740 / 183-1w).